The sequence spans 372 residues: Hydrogenase-2 small chain (372 aa).

A signal peptide (tat-type signal) is located at residues 1–37 (MTGDNTLIHSHGINRRDFMKLCAALAATMGLSSKAAA). [4Fe-4S] cluster is bound by residues cysteine 59, cysteine 62, cysteine 157, cysteine 191, histidine 229, cysteine 232, cysteine 257, and cysteine 263. [3Fe-4S] cluster contacts are provided by cysteine 272, cysteine 292, and cysteine 295.

This sequence belongs to the [NiFe]/[NiFeSe] hydrogenase small subunit family. In terms of assembly, heterodimer of a large and a small subunit. The cofactor is [4Fe-4S] cluster. [3Fe-4S] cluster serves as cofactor. Predicted to be exported by the Tat system. The position of the signal peptide cleavage has not been experimentally proven.

Its subcellular location is the cell membrane. The protein resides in the periplasm. It catalyses the reaction H2 + A = AH2. In terms of biological role, this is one of three E.coli hydrogenases synthesized in response to different physiological conditions. HYD2 is involved in hydrogen uptake. This is Hydrogenase-2 small chain (hybO) from Escherichia coli O157:H7.